A 778-amino-acid chain; its full sequence is Aconitate hydratase, mitochondrial (778 aa).

Residues 1-16 (MLSARSAIKRPIVRGL) constitute a mitochondrion transit peptide. Residues glutamine 95 and 188–190 (DSH) each bind substrate. Cysteine 382 lines the [4Fe-4S] cluster pocket. Position 391 is a phosphoserine (serine 391). A Phosphothreonine modification is found at threonine 409. 2 residues coordinate [4Fe-4S] cluster: cysteine 445 and cysteine 448. 2 residues coordinate substrate: arginine 471 and arginine 476. Serine 556 is modified (phosphoserine). Residues arginine 604 and 667–668 (SR) each bind substrate.

The protein belongs to the aconitase/IPM isomerase family. Monomer. Binds to mitochondrial DNA (mtDNA) and identified as component of mitochondrial nucleoids. [4Fe-4S] cluster is required as a cofactor.

The protein resides in the mitochondrion. It localises to the cytoplasm. The enzyme catalyses citrate = D-threo-isocitrate. The protein operates within carbohydrate metabolism; tricarboxylic acid cycle; isocitrate from oxaloacetate: step 2/2. With respect to regulation, subject to catabolite regulation. In terms of biological role, catalyzes the isomerization of citrate to isocitrate via cis-aconitate, a step in the citric acid cycle. Can also provide minor contributions to the reversible dehydration of (R)-homocitrate to cis-homoaconitate, a step in the alpha-aminoadipate pathway for lysine biosynthesis. Also plays an essential role in mtDNA maintenance. May directly protect mtDNA from accumulation of point mutations and ssDNA breaks as a component of mitochondrial nucleoids, or by preventing accumulation of iron citrate thereby alleviating its detrimental effects in mitochondria. The polypeptide is Aconitate hydratase, mitochondrial (Saccharomyces cerevisiae (strain ATCC 204508 / S288c) (Baker's yeast)).